Reading from the N-terminus, the 365-residue chain is Paraneoplastic antigen Ma2 homolog (365 aa).

Position 2 is an N-acetylalanine (A2). The tract at residues 336-365 is disordered; that stretch reads EEEDAYFEQESREEPGEREGSGCWNNSRNN. Over residues 344–355 the composition is skewed to basic and acidic residues; it reads QESREEPGEREG.

This sequence belongs to the PNMA family. Expressed in the cerebrum, cerebellum and testis.

It is found in the nucleus. The protein resides in the nucleolus. In Mus musculus (Mouse), this protein is Paraneoplastic antigen Ma2 homolog (Pnma2).